Consider the following 781-residue polypeptide: Translation initiation factor IF-2 (781 aa).

Residues 44–195 (RQLDNAVDGT…TPPKPKELPE (152 aa)) form a disordered region. Residues 53 to 65 (TNKKAEAPKKETT) are compositionally biased toward basic and acidic residues. Residues 66–81 (SNENGNSKGPNKPNMT) are compositionally biased toward polar residues. Positions 82 to 93 (NSNEKSNKPNKP) are enriched in low complexity. Positions 115-126 (KPANTGNQTQAS) are enriched in polar residues. Positions 127–169 (GNQQAGGQKRNNNNNSNRPGGGNPNRPGGNNRPNRGGNFNNKG) are enriched in low complexity. The 170-residue stretch at 282–451 (ERPPVVTIMG…LLVSEVEELK (170 aa)) folds into the tr-type G domain. Positions 291–298 (GHVDHGKT) are G1. 291 to 298 (GHVDHGKT) is a binding site for GTP. The tract at residues 316–320 (GITQH) is G2. The tract at residues 337–340 (DTPG) is G3. GTP-binding positions include 337-341 (DTPGH) and 391-394 (NKID). The G4 stretch occupies residues 391 to 394 (NKID). The G5 stretch occupies residues 427–429 (SAK).

Belongs to the TRAFAC class translation factor GTPase superfamily. Classic translation factor GTPase family. IF-2 subfamily.

The protein localises to the cytoplasm. Its function is as follows. One of the essential components for the initiation of protein synthesis. Protects formylmethionyl-tRNA from spontaneous hydrolysis and promotes its binding to the 30S ribosomal subunits. Also involved in the hydrolysis of GTP during the formation of the 70S ribosomal complex. In Listeria monocytogenes serotype 4a (strain HCC23), this protein is Translation initiation factor IF-2.